Consider the following 116-residue polypeptide: NADH-ubiquinone oxidoreductase chain 3 (116 aa).

Helical transmembrane passes span 8-28, 56-76, and 88-108; these read VVAT…LPSL, FFLI…LLPL, and TLLW…YEWF.

Belongs to the complex I subunit 3 family.

The protein resides in the mitochondrion membrane. It catalyses the reaction a ubiquinone + NADH + 5 H(+)(in) = a ubiquinol + NAD(+) + 4 H(+)(out). Functionally, core subunit of the mitochondrial membrane respiratory chain NADH dehydrogenase (Complex I) that is believed to belong to the minimal assembly required for catalysis. Complex I functions in the transfer of electrons from NADH to the respiratory chain. The immediate electron acceptor for the enzyme is believed to be ubiquinone. The polypeptide is NADH-ubiquinone oxidoreductase chain 3 (MT-ND3) (Scyliorhinus canicula (Small-spotted catshark)).